The sequence spans 64 residues: Large ribosomal subunit protein bL35 (64 aa).

A disordered region spans residues 1 to 23 (MPKMKTHRGAAKRFKKTKNKIKR).

It belongs to the bacterial ribosomal protein bL35 family.

This chain is Large ribosomal subunit protein bL35, found in Nitratiruptor sp. (strain SB155-2).